Consider the following 368-residue polypeptide: UDP-N-acetylglucosamine--N-acetylmuramyl-(pentapeptide) pyrophosphoryl-undecaprenol N-acetylglucosamine transferase (368 aa).

Residues 10-12, N124, S196, I251, and Q296 contribute to the UDP-N-acetyl-alpha-D-glucosamine site; that span reads TGG.

This sequence belongs to the glycosyltransferase 28 family. MurG subfamily.

The protein localises to the cell membrane. It carries out the reaction Mur2Ac(oyl-L-Ala-gamma-D-Glu-L-Lys-D-Ala-D-Ala)-di-trans,octa-cis-undecaprenyl diphosphate + UDP-N-acetyl-alpha-D-glucosamine = beta-D-GlcNAc-(1-&gt;4)-Mur2Ac(oyl-L-Ala-gamma-D-Glu-L-Lys-D-Ala-D-Ala)-di-trans,octa-cis-undecaprenyl diphosphate + UDP + H(+). It participates in cell wall biogenesis; peptidoglycan biosynthesis. Functionally, cell wall formation. Catalyzes the transfer of a GlcNAc subunit on undecaprenyl-pyrophosphoryl-MurNAc-pentapeptide (lipid intermediate I) to form undecaprenyl-pyrophosphoryl-MurNAc-(pentapeptide)GlcNAc (lipid intermediate II). The protein is UDP-N-acetylglucosamine--N-acetylmuramyl-(pentapeptide) pyrophosphoryl-undecaprenol N-acetylglucosamine transferase of Limosilactobacillus fermentum (strain NBRC 3956 / LMG 18251) (Lactobacillus fermentum).